Consider the following 434-residue polypeptide: MDLSSQRQSPNGSRGFRLQAPLVDSVSCYCRVDSGLKTVVEARKFVPGSKLCIQPDINPNAHRRKNSKRERTRIQPPLLPGLPDDLAVACLIRVPRAEHRKLRLVCKRWYRLASGNFFYSQRKLLGMSEEWVYVFKRDRDGKISWNTFDPISQLWQPLPPVPREYSEAVGFGCAVLSGCHLYLFGGKDPLRGSMRRVIFYNARTNKWHRAPDMLRKRHFFGCCVINNCLYVAGGECEGIQRTLRSAEVYDPNKNRWSFIADMSTAMVPLIGVVYDKKWFLKGLGSHQLVMSEAYDPEVNSWSPVSDGMVAGWRNPCTSLNGRLYGLDCRDGCKLRVFDESTDSWNKFMDSKAHLGNSKSLEAAALVPLHNKLCIIRNNMSMSLVDVSNPDKNNPRLWENIAVKGQSKSILSNIWSSIAGRALKSHIVHCQVLQA.

Positions 76-122 constitute an F-box domain; that stretch reads PPLLPGLPDDLAVACLIRVPRAEHRKLRLVCKRWYRLASGNFFYSQR. Kelch repeat units follow at residues 129–178, 180–227, 229–276, 278–321, and 325–371; these read EEWV…VLSG, HLYL…VINN, LYVA…VYDK, WFLK…SLNG, and GLDC…LHNK.

The sequence is that of F-box/kelch-repeat protein At1g55270 from Arabidopsis thaliana (Mouse-ear cress).